A 154-amino-acid polypeptide reads, in one-letter code: Cyanate hydratase (154 aa).

Residues R100, E103, and S126 contribute to the active site.

Belongs to the cyanase family.

It carries out the reaction cyanate + hydrogencarbonate + 3 H(+) = NH4(+) + 2 CO2. Catalyzes the reaction of cyanate with bicarbonate to produce ammonia and carbon dioxide. The polypeptide is Cyanate hydratase (Aspergillus fumigatus (strain CBS 144.89 / FGSC A1163 / CEA10) (Neosartorya fumigata)).